The following is a 445-amino-acid chain: Probable carboxypeptidase UREG_07869 (445 aa).

An N-terminal signal peptide occupies residues 1-17 (MKSLILTTLALLPLVSC). Residue D165 participates in Zn(2+) binding. Residue E197 is the Proton acceptor of the active site. Position 198 (E198) interacts with Zn(2+).

It belongs to the peptidase M20A family. Requires Zn(2+) as cofactor.

The protein resides in the secreted. The protein is Probable carboxypeptidase UREG_07869 of Uncinocarpus reesii (strain UAMH 1704).